A 153-amino-acid chain; its full sequence is ORM1-like protein 2 (153 aa).

Over 1–21 (MNVGVAHSEVNPNTRVMNSRG) the chain is Cytoplasmic. 2 helical membrane passes run 22 to 42 (IWLA…SIPF) and 43 to 63 (FSIP…MYVF). Residues 64–105 (LHTVKGTPFETPDQGKARLLTHWEQMDYGLQFTSSRKFLSIS) are Cytoplasmic-facing. A helical transmembrane segment spans residues 106–126 (PIVLYLLASFYTKYDAAHFLI). At 127–153 (NTASLLSVLLPKLPQFHGVRLFGINKY) the chain is on the extracellular side.

The protein belongs to the ORM family. In terms of assembly, ceramide-sensitive subunit of the serine palmitoyltransferase (SPT) complex, which is also composed of SPTLC1, SPTLC2/3 and SPTSSA/B.

It localises to the endoplasmic reticulum membrane. Plays an essential role in the homeostatic regulation of sphingolipid de novo biosynthesis by modulating the activity of the serine palmitoyltransferase (SPT) in response to ceramide levels. When complexed to SPT, the binding of ceramides to its N-terminus stabilizes a conformation that block SPT substrate entry, hence preventing SPT catalytic activity. Through this mechanism, maintains ceramide levels at sufficient concentrations for the production of complex sphingolipids, but which prevents the accumulation of ceramides to levels that trigger apoptosis. In Bos taurus (Bovine), this protein is ORM1-like protein 2 (ORMDL2).